Reading from the N-terminus, the 657-residue chain is Polycomb protein suz12-A (657 aa).

The tract at residues 335–363 is disordered; it reads TAPVAKPLATRNSESSTVDSSKTSNIKPP. Low complexity predominate over residues 347 to 358; the sequence is SESSTVDSSKTS. The C2H2-type zinc finger occupies 413–436; that stretch reads LHCPWCTLNCRKLYSLLKHLKLSH. The tract at residues 528 to 604 is VEFS-box; that stretch reads RLYFHSDSCT…NQMNQACMSF (77 aa).

Belongs to the VEFS (VRN2-EMF2-FIS2-SU(Z)12) family. In terms of assembly, component of the prc2/eed-ezh2 complex.

It localises to the nucleus. Functionally, polycomb group (PcG) protein. Component of the prc2/eed-ezh2 complex, which methylates 'Lys-9' and 'Lys-27' of histone H3, leading to transcriptional repression of the affected target gene. This chain is Polycomb protein suz12-A (suz12a), found in Danio rerio (Zebrafish).